Reading from the N-terminus, the 393-residue chain is Elongation factor Tu (393 aa).

A tr-type G domain is found at Lys10–Val203. Residues Gly19–Thr26 are G1. Gly19–Thr26 contributes to the GTP binding site. Residue Thr26 coordinates Mg(2+). A G2 region spans residues Gly60–Ser64. Positions Asp81–Gly84 are G3. GTP is bound by residues Asp81 to His85 and Asn136 to Asp139. The interval Asn136–Asp139 is G4. A G5 region spans residues Ser173 to Leu175.

Belongs to the TRAFAC class translation factor GTPase superfamily. Classic translation factor GTPase family. EF-Tu/EF-1A subfamily. Monomer.

The protein resides in the cytoplasm. It catalyses the reaction GTP + H2O = GDP + phosphate + H(+). Its function is as follows. GTP hydrolase that promotes the GTP-dependent binding of aminoacyl-tRNA to the A-site of ribosomes during protein biosynthesis. The chain is Elongation factor Tu from Pelodictyon phaeoclathratiforme (strain DSM 5477 / BU-1).